A 79-amino-acid polypeptide reads, in one-letter code: Antimicrobial peptide UyCT1 (79 aa).

Positions 1-23 (MKTQLAFLAITVILMQLFAQTEA) are cleaved as a signal peptide. At I37 the chain carries Isoleucine amide. A propeptide spanning residues 41–79 (GLRNVDQIADLFDSGLSDADDLFDSGLSDADAKFMKMFM) is cleaved from the precursor.

This sequence belongs to the non-disulfide-bridged peptide (NDBP) superfamily. Short antimicrobial peptide (group 4) family. As to expression, expressed by the venom gland.

Its subcellular location is the secreted. The protein localises to the target cell membrane. Functionally, inhibits the growth of Gram-positive (S.aureus, MIC=15 uM) and Gram-negative bacteria (E.coli, MIC=10 uM and P.aeruginosa, MIC=10 uM). It also shows 26% of hemolysis when 15 uM are tested (81% at 50 uM). Inhibits the growth of Gram-negative bacteria (E.coli, MIC=25 uM and P.aeruginosa, MIC=40 uM). It also shows 7% of hemolysis when 50 uM are tested. Does not show activity against the Gram-positive bacteria S.aureus. The sequence is that of Antimicrobial peptide UyCT1 from Urodacus yaschenkoi (Inland robust scorpion).